Consider the following 338-residue polypeptide: Increasing suppression factor 1 (338 aa).

The segment covering 50 to 70 (ENSSKSNNSHHSSSTNAGNTS) has biased composition (low complexity). The segment at 50–72 (ENSSKSNNSHHSSSTNAGNTSRH) is disordered. Phosphoserine is present on Ser-119. A compositionally biased stretch (low complexity) spans 267–306 (SLLSNGSSSSPLQTRNNSYSNSLVKSPSNSSLNTSVASSN). The tract at residues 267–322 (SLLSNGSSSSPLQTRNNSYSNSLVKSPSNSSLNTSVASSNEESSPHTSNCLEERNP) is disordered. Over residues 307–316 (EESSPHTSNC) the composition is skewed to polar residues.

It belongs to the ISF1/MBR1 family.

Functionally, could influence the NAM7/UPF1 function, possibly at the level of mRNA turnover. Participates in mitochondrial biogenesis. In Saccharomyces cerevisiae (strain JAY291) (Baker's yeast), this protein is Increasing suppression factor 1 (ISF1).